We begin with the raw amino-acid sequence, 152 residues long: 3-hydroxyacyl-[acyl-carrier-protein] dehydratase FabZ (152 aa).

Residue His58 is part of the active site.

It belongs to the thioester dehydratase family. FabZ subfamily.

Its subcellular location is the cytoplasm. The catalysed reaction is a (3R)-hydroxyacyl-[ACP] = a (2E)-enoyl-[ACP] + H2O. In terms of biological role, involved in unsaturated fatty acids biosynthesis. Catalyzes the dehydration of short chain beta-hydroxyacyl-ACPs and long chain saturated and unsaturated beta-hydroxyacyl-ACPs. The polypeptide is 3-hydroxyacyl-[acyl-carrier-protein] dehydratase FabZ (Prochlorococcus marinus (strain MIT 9312)).